A 256-amino-acid chain; its full sequence is MNNIWWHTKGQGNVHLVLLHGWGLNAGVWRCIDEELSSHFTLHLVDLPGFGRSRGFGALSLADMAEVVLRQAPDKAIWLGWSLGGLVASQIALTHPERVQALVTVASSPCFSARDEWPGIKPDVLAGFQQQLSDDFQRTVERFLALQTMGTETARQDARALKKTVLALPMPEVDVLNGGLEILKTVDLRQPLQNVPMPFLRLYGYLDGLVPRKVVPMLDKLWPHSESYIFAKAAHAPFISHPDEFCHLLVALKQRV.

One can recognise an AB hydrolase-1 domain in the interval 15–242 (HLVLLHGWGL…AAHAPFISHP (228 aa)). Substrate is bound by residues W22, 82 to 83 (SL), and 143 to 147 (FLALQ). The Nucleophile role is filled by S82. Residues D207 and H235 contribute to the active site. A substrate-binding site is contributed by H235.

The protein belongs to the AB hydrolase superfamily. Carboxylesterase BioH family. Monomer.

It localises to the cytoplasm. The enzyme catalyses 6-carboxyhexanoyl-[ACP] methyl ester + H2O = 6-carboxyhexanoyl-[ACP] + methanol + H(+). It functions in the pathway cofactor biosynthesis; biotin biosynthesis. Functionally, the physiological role of BioH is to remove the methyl group introduced by BioC when the pimeloyl moiety is complete. It allows to synthesize pimeloyl-ACP via the fatty acid synthetic pathway through the hydrolysis of the ester bonds of pimeloyl-ACP esters. The chain is Pimeloyl-[acyl-carrier protein] methyl ester esterase from Escherichia coli O81 (strain ED1a).